The following is a 432-amino-acid chain: Serine/threonine-protein phosphatase 2A activator 1 (432 aa).

A disordered region spans residues 322 to 432 (PYSKVEDEEP…MAPTKAPWAK (111 aa)). A compositionally biased stretch (basic and acidic residues) spans 366 to 389 (TVERLARRDGQRAAREKEEREDRA). Residues 396–412 (TTGAPGATALPPTRAPG) show a composition bias toward low complexity.

This sequence belongs to the PTPA-type PPIase family.

Its subcellular location is the cytoplasm. It localises to the nucleus. The catalysed reaction is [protein]-peptidylproline (omega=180) = [protein]-peptidylproline (omega=0). Its function is as follows. PPIases accelerate the folding of proteins. It catalyzes the cis-trans isomerization of proline imidic peptide bonds in oligopeptides. Acts as a regulatory subunit for PP2A-like phosphatases modulating their activity or substrate specificity, probably by inducing a conformational change in the catalytic subunit, a direct target of the PPIase. Can reactivate inactive phosphatase PP2A-phosphatase methylesterase complexes (PP2Ai) in presence of ATP and Mg(2+) by dissociating the inactive form from the complex. This chain is Serine/threonine-protein phosphatase 2A activator 1 (RRD1), found in Yarrowia lipolytica (strain CLIB 122 / E 150) (Yeast).